A 121-amino-acid chain; its full sequence is Large ribosomal subunit protein bL12 (121 aa).

This sequence belongs to the bacterial ribosomal protein bL12 family. Homodimer. Part of the ribosomal stalk of the 50S ribosomal subunit. Forms a multimeric L10(L12)X complex, where L10 forms an elongated spine to which 2 to 4 L12 dimers bind in a sequential fashion. Binds GTP-bound translation factors.

Its function is as follows. Forms part of the ribosomal stalk which helps the ribosome interact with GTP-bound translation factors. Is thus essential for accurate translation. This chain is Large ribosomal subunit protein bL12, found in Escherichia coli O45:K1 (strain S88 / ExPEC).